The chain runs to 1342 residues: DNA-directed RNA polymerase subunit beta (1342 aa).

This sequence belongs to the RNA polymerase beta chain family. In terms of assembly, the RNAP catalytic core consists of 2 alpha, 1 beta, 1 beta' and 1 omega subunit. When a sigma factor is associated with the core the holoenzyme is formed, which can initiate transcription.

The enzyme catalyses RNA(n) + a ribonucleoside 5'-triphosphate = RNA(n+1) + diphosphate. Its function is as follows. DNA-dependent RNA polymerase catalyzes the transcription of DNA into RNA using the four ribonucleoside triphosphates as substrates. The sequence is that of DNA-directed RNA polymerase subunit beta from Yersinia pseudotuberculosis serotype O:1b (strain IP 31758).